Consider the following 714-residue polypeptide: Fumarate reductase flavoprotein subunit (714 aa).

FAD contacts are provided by residues 13–16 (GGLA), 42–44 (SHS), and 49–50 (GG). At His-43 the chain carries Tele-8alpha-FAD histidine. Active-site residues include His-257 and Arg-273. FAD contacts are provided by residues Glu-420 and 436–437 (SV).

It belongs to the FAD-dependent oxidoreductase 2 family. FRD/SDH subfamily. In terms of assembly, part of an enzyme complex containing three subunits: a flavoprotein (frdA), an iron-sulfur protein (frdB), and diheme cytochrome b (frdC). FAD serves as cofactor.

It localises to the cell inner membrane. The catalysed reaction is a quinone + succinate = fumarate + a quinol. The fumarate reductase enzyme complex is required for fumarate respiration. This chain is Fumarate reductase flavoprotein subunit (frdA), found in Helicobacter pylori (strain ATCC 700392 / 26695) (Campylobacter pylori).